The chain runs to 156 residues: Cyanate hydratase (156 aa).

Residues arginine 96, glutamate 99, and serine 122 contribute to the active site.

The protein belongs to the cyanase family.

The enzyme catalyses cyanate + hydrogencarbonate + 3 H(+) = NH4(+) + 2 CO2. Its function is as follows. Catalyzes the reaction of cyanate with bicarbonate to produce ammonia and carbon dioxide. This chain is Cyanate hydratase, found in Pseudomonas aeruginosa (strain LESB58).